The chain runs to 536 residues: CTP synthase (536 aa).

Positions 1-267 (MTKYIFVTGG…DQIVCDHLKL (267 aa)) are amidoligase domain. Serine 13 contributes to the CTP binding site. Residue serine 13 coordinates UTP. ATP is bound at residue 14-19 (SIGKGI). L-glutamine is bound at residue tyrosine 54. Aspartate 71 is a binding site for ATP. Positions 71 and 141 each coordinate Mg(2+). CTP-binding positions include 148–150 (DIE), 188–193 (KTKPTQ), and lysine 224. UTP is bound by residues 188-193 (KTKPTQ) and lysine 224. In terms of domain architecture, Glutamine amidotransferase type-1 spans 292 to 535 (KIALVGKYVE…ITAAVENSQA (244 aa)). Residue glycine 354 participates in L-glutamine binding. The Nucleophile; for glutamine hydrolysis role is filled by cysteine 381. L-glutamine is bound by residues 382–385 (LGMQ), glutamate 405, and arginine 463. Active-site residues include histidine 508 and glutamate 510.

Belongs to the CTP synthase family. In terms of assembly, homotetramer.

It carries out the reaction UTP + L-glutamine + ATP + H2O = CTP + L-glutamate + ADP + phosphate + 2 H(+). The enzyme catalyses L-glutamine + H2O = L-glutamate + NH4(+). The catalysed reaction is UTP + NH4(+) + ATP = CTP + ADP + phosphate + 2 H(+). The protein operates within pyrimidine metabolism; CTP biosynthesis via de novo pathway; CTP from UDP: step 2/2. Its activity is regulated as follows. Allosterically activated by GTP, when glutamine is the substrate; GTP has no effect on the reaction when ammonia is the substrate. The allosteric effector GTP functions by stabilizing the protein conformation that binds the tetrahedral intermediate(s) formed during glutamine hydrolysis. Inhibited by the product CTP, via allosteric rather than competitive inhibition. Its function is as follows. Catalyzes the ATP-dependent amination of UTP to CTP with either L-glutamine or ammonia as the source of nitrogen. Regulates intracellular CTP levels through interactions with the four ribonucleotide triphosphates. In Streptococcus mutans serotype c (strain ATCC 700610 / UA159), this protein is CTP synthase.